The chain runs to 259 residues: Synaptophysin-like protein 1 (259 aa).

Topologically, residues 1–33 (MAPNIYLVRQRISRLGQRMSGFQINLNPLKEPL) are cytoplasmic. Residues 28–237 (PLKEPLGFIK…NAWFVYKETS (210 aa)) enclose the MARVEL domain. Residues 34–54 (GFIKVLEWIASIFAFATCGGF) form a helical membrane-spanning segment. Topologically, residues 55–116 (KGQTEIQVNC…LIGDYSSSAQ (62 aa)) are vesicular. N-linked (GlcNAc...) asparagine glycosylation occurs at Asn-71. A helical membrane pass occupies residues 117-137 (FYVTFAVFVFLYCIAALLLYV). Topologically, residues 138 to 150 (GYTSLYLDSRKLP) are cytoplasmic. The helical transmembrane segment at 151–171 (MIDFVVTLVATFLWLVSTSAW) threads the bilayer. Residues 172-212 (AKALTDIKIATGHNIIDELPPCKKKAVLCYFGSVTSMGSLN) lie on the Vesicular side of the membrane. Asn-212 carries an N-linked (GlcNAc...) asparagine glycan. Residues 213-233 (VSVIFGFLNMILWGGNAWFVY) traverse the membrane as a helical segment. The Cytoplasmic portion of the chain corresponds to 234 to 259 (KETSLHSPSNTSAPHSQGGIPPPTGI).

It belongs to the synaptophysin/synaptobrevin family.

It localises to the cytoplasmic vesicle membrane. Its subcellular location is the melanosome. The sequence is that of Synaptophysin-like protein 1 (SYPL1) from Homo sapiens (Human).